Consider the following 2774-residue polypeptide: Teneurin-2 (2774 aa).

In terms of domain architecture, Teneurin N-terminal spans 1 to 375 (MDVKDRRHRS…KPSKYCSWKC (375 aa)). Topologically, residues 1–379 (MDVKDRRHRS…YCSWKCAALS (379 aa)) are cytoplasmic. Phosphoserine is present on residues serine 90 and serine 124. Residues 111–271 (TGSDADSDTE…HHHSSANSLN (161 aa)) form a disordered region. Positions 141-155 (SSGLSSRENSALTLT) are enriched in polar residues. Threonine 155 is subject to Phosphothreonine. Residue serine 157 is modified to Phosphoserine. Positions 159–168 (NENKSDDENG) are enriched in basic and acidic residues. Residues 176–188 (SPSLLPSAQLPSS) show a composition bias toward low complexity. A compositionally biased stretch (polar residues) spans 202–211 (DSNTSHQIMD). The span at 229–240 (SGPQQASSSGPP) shows a compositional bias: low complexity. Residues 380 to 400 (AIAAALLLAILLAYFIAMHLL) form a helical membrane-spanning segment. The Extracellular segment spans residues 401 to 2774 (GLNWQLQPAD…FLRQNEMGKR (2374 aa)). Residues asparagine 443 and asparagine 482 are each glycosylated (N-linked (GlcNAc...) asparagine). 8 EGF-like domains span residues 575–603 (DCPR…ADCA), 598–634 (LGAD…AECD), 636–668 (PMNQ…EHCE), 669–701 (EVDC…NCEL), 702–735 (ARVQ…PDCS), 738–766 (VCSV…AACD), 769–797 (VCHP…EHCT), and 808–841 (DGCP…PGCN). Cystine bridges form between cysteine 576–cysteine 586, cysteine 580–cysteine 591, cysteine 593–cysteine 602, cysteine 611–cysteine 622, cysteine 624–cysteine 633, cysteine 640–cysteine 651, cysteine 645–cysteine 656, cysteine 658–cysteine 667, cysteine 672–cysteine 683, cysteine 677–cysteine 688, cysteine 690–cysteine 699, cysteine 710–cysteine 723, cysteine 725–cysteine 734, cysteine 739–cysteine 749, cysteine 743–cysteine 754, cysteine 756–cysteine 765, cysteine 770–cysteine 780, cysteine 774–cysteine 785, cysteine 787–cysteine 796, cysteine 810–cysteine 820, cysteine 814–cysteine 829, and cysteine 831–cysteine 840. N-linked (GlcNAc...) asparagine glycosylation is found at asparagine 925, asparagine 948, and asparagine 1267. NHL repeat units follow at residues 1272-1316 (LELR…VKSL), 1342-1386 (ARCG…NGII), 1401-1452 (LSCD…IAGR), 1474-1501 (LESA…INRL), and 1530-1573 (CYSG…VSKN). The stretch at 1583–1602 (YEAASPGEQELYVFNADGIH) is one YD 1 repeat. Asparagine 1616 is a glycosylation site (N-linked (GlcNAc...) asparagine). YD repeat units lie at residues 1619 to 1639 (YSTD…LKIR), 1682 to 1701 (YDGN…WTTF), and 1702 to 1724 (YDYD…TSLH). Residues asparagine 1712, asparagine 1749, asparagine 1773, asparagine 1807, and asparagine 1892 are each glycosylated (N-linked (GlcNAc...) asparagine). YD repeat units follow at residues 1895-1914 (YFFN…ERTD), 1936-1954 (YLDK…YIFE), 1955-1975 (YDSS…HSMS), 1982-1999 (YIRN…VIFD), 2000-2021 (YSDD…VFYK), 2022-2039 (YGKL…TAVT), 2042-2062 (YDET…FSCT), 2065-2085 (YRKI…EGMV), 2093-2113 (YHDN…TPLP), 2119-2136 (YDEI…GVIY), 2137-2163 (YDIN…IKEV), 2165-2178 (YEMF…MTVQ), 2179-2202 (YDSM…TKYT), 2205-2225 (YDGD…WRYS), 2226-2246 (YDLN…LMPL), 2248-2268 (YDLR…DDDG), 2280-2300 (YNSK…SVQY), and 2302-2322 (YDGV…LQYF). Residue asparagine 1993 is glycosylated (N-linked (GlcNAc...) asparagine). Asparagine 2197 carries an N-linked (GlcNAc...) asparagine glycan. Asparagine 2337 carries N-linked (GlcNAc...) asparagine glycosylation. A YD 23 repeat occupies 2348-2389 (YDLQGHLFAMESSSGEEYYVASDNTGTPLAVFSINGLMIKQL). A glycan (N-linked (GlcNAc...) asparagine) is linked at asparagine 2648.

This sequence belongs to the tenascin family. Teneurin subfamily. Homodimer; disulfide-linked. Heterodimer with either TENM1 or TENM3. May also form heterodimer with TENM4. Isoform 2 (C-terminal globular domain) interacts with ADGRL1 isoform 2. Post-translationally, derives from the membrane form by proteolytic processing. Derives from the plasma membrane form by proteolytic cleavage and translocates to the nucleus. Homophilic binding of the C-terminal extracellular domain stimulates its proteolytic cleavage and release in the cytoplasmic. Is subjected to rapid degradation by the proteasome pathway. As to expression, highly expressed in heart, followed by brain, liver, kidney and fetal brain and weakly expressed in lung and testis. No expression was detected in skeletal muscle, pancreas, spleen, ovary and fetal liver.

It localises to the cell membrane. The protein localises to the presynaptic cell membrane. It is found in the postsynaptic cell membrane. Its subcellular location is the endoplasmic reticulum. The protein resides in the golgi apparatus. It localises to the synapse. The protein localises to the cell projection. It is found in the dendritic spine. Its subcellular location is the filopodium. The protein resides in the growth cone. It localises to the nucleus. The protein localises to the PML body. Its function is as follows. Involved in neural development, regulating the establishment of proper connectivity within the nervous system. Acts as a ligand of the ADGRL1 and ADGRL3 receptors that are expressed at the surface of adjacent cells. Promotes the formation of filopodia and enlarged growth cone in neuronal cells. Mediates axon guidance and homophilic and heterophilic cell-cell adhesion. May function as a cellular signal transducer. Acts as a ligand of the ADGRL1 receptor. Mediates axon guidance and heterophilic cell-cell adhesion. In terms of biological role, induces gene transcription inhibition. The chain is Teneurin-2 (TENM2) from Homo sapiens (Human).